The primary structure comprises 145 residues: uncharacterized protein (145 aa).

The protein to B.subtilis XkdJ.

This is an uncharacterized protein from Bacillus subtilis (strain 168).